A 429-amino-acid polypeptide reads, in one-letter code: Dihydroorotase (429 aa).

Zn(2+) is bound by residues H61 and H63. Residues 63–65 (HYR) and N95 contribute to the substrate site. The Zn(2+) site is built by D153, H180, and H233. A substrate-binding site is contributed by N279. D306 is a binding site for Zn(2+). The active site involves D306. Substrate is bound by residues H310 and 324-325 (FG).

Belongs to the metallo-dependent hydrolases superfamily. DHOase family. Class I DHOase subfamily. It depends on Zn(2+) as a cofactor.

The enzyme catalyses (S)-dihydroorotate + H2O = N-carbamoyl-L-aspartate + H(+). It functions in the pathway pyrimidine metabolism; UMP biosynthesis via de novo pathway; (S)-dihydroorotate from bicarbonate: step 3/3. In terms of biological role, catalyzes the reversible cyclization of carbamoyl aspartate to dihydroorotate. This is Dihydroorotase from Ligilactobacillus salivarius (strain UCC118) (Lactobacillus salivarius).